A 213-amino-acid chain; its full sequence is tRNA (guanine-N(7)-)-methyltransferase (213 aa).

Positions 44, 69, 96, and 118 each coordinate S-adenosyl-L-methionine. Residue D118 is part of the active site. K122 contacts substrate. The segment at 124-129 (RHEKRR) is interaction with RNA. Substrate is bound by residues D154 and 191–194 (TEYE).

This sequence belongs to the class I-like SAM-binding methyltransferase superfamily. TrmB family. Homodimer.

It catalyses the reaction guanosine(46) in tRNA + S-adenosyl-L-methionine = N(7)-methylguanosine(46) in tRNA + S-adenosyl-L-homocysteine. Its pathway is tRNA modification; N(7)-methylguanine-tRNA biosynthesis. Its function is as follows. Catalyzes the formation of N(7)-methylguanine at position 46 (m7G46) in tRNA. This chain is tRNA (guanine-N(7)-)-methyltransferase, found in Bacillus subtilis (strain 168).